The chain runs to 192 residues: Imidazoleglycerol-phosphate dehydratase (192 aa).

This sequence belongs to the imidazoleglycerol-phosphate dehydratase family.

The protein localises to the cytoplasm. The enzyme catalyses D-erythro-1-(imidazol-4-yl)glycerol 3-phosphate = 3-(imidazol-4-yl)-2-oxopropyl phosphate + H2O. It participates in amino-acid biosynthesis; L-histidine biosynthesis; L-histidine from 5-phospho-alpha-D-ribose 1-diphosphate: step 6/9. This chain is Imidazoleglycerol-phosphate dehydratase, found in Staphylococcus aureus (strain bovine RF122 / ET3-1).